The chain runs to 159 residues: Eukaryotic translation initiation factor 5A-4 (159 aa).

Positions 1–12 (MSDEEHQFESKA) are enriched in basic and acidic residues. Residues 1–21 (MSDEEHQFESKADAGASKTYP) form a disordered region. Hypusine is present on K52.

This sequence belongs to the eIF-5A family. Post-translationally, lys-52 undergoes hypusination, a unique post-translational modification that consists in the addition of a butylamino group from spermidine to lysine side chain, leading to the formation of the unusual amino acid hypusine. eIF-5As are the only known proteins to undergo this modification, which is essential for their function.

Translation factor that promotes translation elongation and termination, particularly upon ribosome stalling at specific amino acid sequence contexts. Binds between the exit (E) and peptidyl (P) site of the ribosome and promotes rescue of stalled ribosome: specifically required for efficient translation of polyproline-containing peptides as well as other motifs that stall the ribosome. Acts as a ribosome quality control (RQC) cofactor by joining the RQC complex to facilitate peptidyl transfer during CAT tailing step. This chain is Eukaryotic translation initiation factor 5A-4 (EIF5A4), found in Solanum tuberosum (Potato).